The primary structure comprises 233 residues: Large ribosomal subunit protein uL1 (233 aa).

This sequence belongs to the universal ribosomal protein uL1 family. Part of the 50S ribosomal subunit.

Its function is as follows. Binds directly to 23S rRNA. The L1 stalk is quite mobile in the ribosome, and is involved in E site tRNA release. Functionally, protein L1 is also a translational repressor protein, it controls the translation of the L11 operon by binding to its mRNA. The sequence is that of Large ribosomal subunit protein uL1 from Rhizobium etli (strain CIAT 652).